Consider the following 1076-residue polypeptide: JmjC domain-containing histone demethylation protein 1 (1076 aa).

Positions 93 to 265 (FSQTPLEDLV…TQLRVYQVEN (173 aa)) constitute a JmjC domain. Thr-159 contributes to the substrate binding site. Fe cation is bound by residues His-162 and Asp-164. Lys-179 provides a ligand contact to substrate. His-233 is a binding site for Fe cation. 2 disordered regions span residues 598–748 (FEEE…DPVV) and 789–1056 (KIEP…KIPS). Positions 610 to 634 (DQEEEEYDAEEPEDQEEEEEDEYQA) are enriched in acidic residues. Residues 653–680 (AKNDESEEVSVKKDKKEKMEKVEKDEKR) are compositionally biased toward basic and acidic residues. Residues 681–698 (RNSKSKKDKISKEKKKKE) show a composition bias toward basic residues. 2 stretches are compositionally biased toward basic and acidic residues: residues 699–714 (RERI…ELRA) and 789–811 (KIEP…EPEH). Low complexity predominate over residues 935–946 (ASAPSSRHSSIS). Polar residues-rich tracts occupy residues 957–990 (FNSS…SINR) and 1004–1019 (DSLS…TYPT). Over residues 1044–1056 (QHHDDGHKHKIPS) the composition is skewed to basic and acidic residues.

It belongs to the JHDM1 histone demethylase family. The cofactor is Fe(2+).

Its subcellular location is the nucleus. It carries out the reaction N(6),N(6)-dimethyl-L-lysyl(36)-[histone H3] + 2 2-oxoglutarate + 2 O2 = L-lysyl(36)-[histone H3] + 2 formaldehyde + 2 succinate + 2 CO2. Functionally, histone demethylase that specifically demethylates 'Lys-36' of histone H3, thereby playing a central role in histone code. Has a role in regulating lifespan. This chain is JmjC domain-containing histone demethylation protein 1 (jhdm-1), found in Caenorhabditis elegans.